Here is a 209-residue protein sequence, read N- to C-terminus: Uracil phosphoribosyltransferase (209 aa).

5-phospho-alpha-D-ribose 1-diphosphate-binding positions include Arg-79, Arg-104, and 131–139; that span reads DPMLATGGS. Uracil contacts are provided by residues Ile-194 and 199-201; that span reads GDA. Asp-200 provides a ligand contact to 5-phospho-alpha-D-ribose 1-diphosphate.

It belongs to the UPRTase family. Mg(2+) serves as cofactor.

It carries out the reaction UMP + diphosphate = 5-phospho-alpha-D-ribose 1-diphosphate + uracil. Its pathway is pyrimidine metabolism; UMP biosynthesis via salvage pathway; UMP from uracil: step 1/1. Its activity is regulated as follows. Allosterically activated by GTP. Functionally, catalyzes the conversion of uracil and 5-phospho-alpha-D-ribose 1-diphosphate (PRPP) to UMP and diphosphate. The protein is Uracil phosphoribosyltransferase of Agathobacter rectalis (strain ATCC 33656 / DSM 3377 / JCM 17463 / KCTC 5835 / VPI 0990) (Eubacterium rectale).